The sequence spans 406 residues: Probable sodium/metabolite cotransporter BASS1, chloroplastic (406 aa).

Residues 1-64 constitute a chloroplast transit peptide; it reads MPLLRRPPAA…RHLCGIPSSR (64 aa). 9 helical membrane passes run 98–118, 123–143, 152–172, 187–209, 217–237, 252–272, 278–298, 315–335, and 376–396; these read VGEVLSLGFPVWVASACAVAL, AFLWVSPMAQIVGISFTMLGM, LKTALLMPKELASGFLLQYSV, PSYYAAGLILVSCCPGGTASNIV, VALSVLMTAASTFAAAFLTPL, MGLFVSTSQVVLAPVLLGALL, GLVQLVSPLMPFIAVATVAVL, LQVVMSVCWLHASGFFFGYVL, and VPCAVSSVCHSVYGSLLAGIW.

This sequence belongs to the bile acid:sodium symporter (BASS) (TC 2.A.28) family.

It localises to the membrane. Its subcellular location is the plastid. The protein localises to the chloroplast envelope. In terms of biological role, may function as sodium-coupled metabolite transporter across the chloroplast envelope. The chain is Probable sodium/metabolite cotransporter BASS1, chloroplastic (BASS1) from Oryza sativa subsp. japonica (Rice).